A 73-amino-acid chain; its full sequence is Small proline-rich protein 2G (73 aa).

Residues 1-11 (MSYQQQQCKQP) are compositionally biased toward low complexity. Residues 1 to 20 (MSYQQQQCKQPCQPPPVCPT) are disordered. 3 tandem repeats follow at residues 21-29 (PKCPEPCPP), 30-38 (PKCPEPYLP), and 39-47 (PPCPPEHCP). The 3 X 9 AA approximate tandem repeats stretch occupies residues 21–47 (PKCPEPCPPPKCPEPYLPPPCPPEHCP).

This sequence belongs to the cornifin (SPRR) family.

The protein localises to the cytoplasm. Cross-linked envelope protein of keratinocytes. It is a keratinocyte protein that first appears in the cell cytosol, but ultimately becomes cross-linked to membrane proteins by transglutaminase. All that results in the formation of an insoluble envelope beneath the plasma membrane. The polypeptide is Small proline-rich protein 2G (SPRR2G) (Homo sapiens (Human)).